The primary structure comprises 112 residues: Large ribosomal subunit protein bL17 (112 aa).

This sequence belongs to the bacterial ribosomal protein bL17 family. In terms of assembly, part of the 50S ribosomal subunit. Contacts protein L32.

The protein is Large ribosomal subunit protein bL17 of Heliobacterium modesticaldum (strain ATCC 51547 / Ice1).